The following is a 102-amino-acid chain: Small ribosomal subunit protein uS10 (102 aa).

This sequence belongs to the universal ribosomal protein uS10 family. As to quaternary structure, part of the 30S ribosomal subunit.

Involved in the binding of tRNA to the ribosomes. This Oenococcus oeni (strain ATCC BAA-331 / PSU-1) protein is Small ribosomal subunit protein uS10.